The chain runs to 501 residues: Na(+)/H(+) antiporter NhaB (501 aa).

Transmembrane regions (helical) follow at residues 24–44 (VILL…PGVA), 46–66 (WLLI…YPLL), 90–110 (VLTN…IYFM), 145–165 (FLDA…FFSV), 206–226 (LLMH…VGEP), 239–259 (FAGF…AGLA), 302–319 (ALWI…GLAF), 351–371 (FQES…VAVI), 395–415 (MFFI…VATV), 450–470 (VATP…IAPL), and 478–498 (MVIM…YMVT).

The protein belongs to the NhaB Na(+)/H(+) (TC 2.A.34) antiporter family.

Its subcellular location is the cell inner membrane. It catalyses the reaction 2 Na(+)(in) + 3 H(+)(out) = 2 Na(+)(out) + 3 H(+)(in). Functionally, na(+)/H(+) antiporter that extrudes sodium in exchange for external protons. The sequence is that of Na(+)/H(+) antiporter NhaB from Marinobacter nauticus (strain ATCC 700491 / DSM 11845 / VT8) (Marinobacter aquaeolei).